Reading from the N-terminus, the 514-residue chain is 2-isopropylmalate synthase (514 aa).

Residues 5–268 (LIIFDTTLRD…DVGIDTTQIV (264 aa)) enclose the Pyruvate carboxyltransferase domain. 4 residues coordinate Mn(2+): Asp14, His202, His204, and Asn239. The segment at 395–514 (KFVSLSQHSE…KDDKLNPQRS (120 aa)) is regulatory domain.

The protein belongs to the alpha-IPM synthase/homocitrate synthase family. LeuA type 1 subfamily. In terms of assembly, homodimer. The cofactor is Mn(2+).

It is found in the cytoplasm. It catalyses the reaction 3-methyl-2-oxobutanoate + acetyl-CoA + H2O = (2S)-2-isopropylmalate + CoA + H(+). Its pathway is amino-acid biosynthesis; L-leucine biosynthesis; L-leucine from 3-methyl-2-oxobutanoate: step 1/4. Functionally, catalyzes the condensation of the acetyl group of acetyl-CoA with 3-methyl-2-oxobutanoate (2-ketoisovalerate) to form 3-carboxy-3-hydroxy-4-methylpentanoate (2-isopropylmalate). This is 2-isopropylmalate synthase from Burkholderia multivorans (strain ATCC 17616 / 249).